The chain runs to 269 residues: Phosphatidylglycerol--prolipoprotein diacylglyceryl transferase (269 aa).

4 helical membrane-spanning segments follow: residues 14–34 (IVQI…AGII), 49–69 (VAPE…IPMA), 89–109 (VFAI…GLLA), and 118–138 (GYSL…GQAI). An a 1,2-diacyl-sn-glycero-3-phospho-(1'-sn-glycerol)-binding site is contributed by arginine 140. 3 helical membrane-spanning segments follow: residues 180 to 200 (TFLY…FVFF), 208 to 228 (GSIA…IEGL), and 240 to 260 (TAQL…WWLN).

This sequence belongs to the Lgt family.

It localises to the cell inner membrane. The enzyme catalyses L-cysteinyl-[prolipoprotein] + a 1,2-diacyl-sn-glycero-3-phospho-(1'-sn-glycerol) = an S-1,2-diacyl-sn-glyceryl-L-cysteinyl-[prolipoprotein] + sn-glycerol 1-phosphate + H(+). Its pathway is protein modification; lipoprotein biosynthesis (diacylglyceryl transfer). Catalyzes the transfer of the diacylglyceryl group from phosphatidylglycerol to the sulfhydryl group of the N-terminal cysteine of a prolipoprotein, the first step in the formation of mature lipoproteins. This chain is Phosphatidylglycerol--prolipoprotein diacylglyceryl transferase, found in Gloeobacter violaceus (strain ATCC 29082 / PCC 7421).